The following is a 577-amino-acid chain: Arginine--tRNA ligase (577 aa).

The short motif at 122-132 is the 'HIGH' region element; it reads PNVAKEMHVGH.

Belongs to the class-I aminoacyl-tRNA synthetase family. As to quaternary structure, monomer.

The protein localises to the cytoplasm. The enzyme catalyses tRNA(Arg) + L-arginine + ATP = L-arginyl-tRNA(Arg) + AMP + diphosphate. The protein is Arginine--tRNA ligase of Vibrio vulnificus (strain CMCP6).